A 58-amino-acid chain; its full sequence is Mastoparan-VT7 (58 aa).

Residues 1-27 form the signal peptide; it reads MKNTILILFTAFIALLGFFGMSAEALA. AXPX repeat units lie at residues 27 to 30, 31 to 34, 35 to 38, and 41 to 44; these read ADPK, ADPL, AGPN, and ADPE. Positions 28–45 are excised as a propeptide; it reads DPKADPLAGPNPDADPEA.

Belongs to the MCD family. Mastoparan subfamily. In terms of tissue distribution, expressed by the venom gland.

Its subcellular location is the secreted. Its function is as follows. The synthetic peptide shows antimicrobial activities against Gram-negative bacteria (but not against all strains tested), Gram-positive bacteria (all strains tested) and the fungi C.albicans (but not C.parapsilosis). Exhibits little hemolytic activity against washed human erythrocytes. This chain is Mastoparan-VT7, found in Vespa tropica (Greater banded hornet).